Here is a 600-residue protein sequence, read N- to C-terminus: Transcription factor efl-3 (600 aa).

The tract at residues 35-65 is disordered; it reads LPEPRVNRTTDPDHENLLPSPVPRPSPAMSQ. The segment covering 39–50 has biased composition (basic and acidic residues); the sequence is RVNRTTDPDHEN. DNA-binding regions lie at residues 95–164 and 253–343; these read RKEK…QWQG and RDRQ…VYCG.

Belongs to the E2F/DP family.

It localises to the nucleus. Probable transcription factor which represses gene expression in a subset of ventral nerve cord neurons. Involved in regulating programmed cell death and determining cell fate during development, acting in a partially redundant manner with lin-39 to repress the BH3 domain-encoding gene egl-1 in the VA and VB motor neurons. The chain is Transcription factor efl-3 from Caenorhabditis elegans.